Reading from the N-terminus, the 590-residue chain is V-type ATP synthase alpha chain (590 aa).

Residue 234–241 coordinates ATP; that stretch reads GGFGAGKT.

This sequence belongs to the ATPase alpha/beta chains family.

The enzyme catalyses ATP + H2O + 4 H(+)(in) = ADP + phosphate + 5 H(+)(out). Its function is as follows. Produces ATP from ADP in the presence of a proton gradient across the membrane. The V-type alpha chain is a catalytic subunit. The polypeptide is V-type ATP synthase alpha chain (Halothermothrix orenii (strain H 168 / OCM 544 / DSM 9562)).